A 305-amino-acid chain; its full sequence is MHYSVLLQESINDLNINPQGIYIDATFGRGGHSKAILNRLTTGRLIAFDKDLDAISYARENFQFSNFEIVHASFASIYDYCLQHSLLGKIDGIIMDLGVSSPQLDNAARGFSFTHNGPLDMRMDVSKGITASQALEELSVDDLSYIFKVYGEERFAKKIALRIKDYIQQNGSIRKTLELAELILATIGKKEKKNPATRCFQALRIYVNNELKDLEALLENILAVIKSGGRIAAISFHSLEDRIVKQKFSALINPKQELNRITKMLPQDSSQIKLKWITKKSKANEDELNQNVRSRSAILRVVEKL.

S-adenosyl-L-methionine contacts are provided by residues 30 to 32, Asp49, Phe74, Asp96, and Gln103; that span reads GGH.

Belongs to the methyltransferase superfamily. RsmH family.

It is found in the cytoplasm. It carries out the reaction cytidine(1402) in 16S rRNA + S-adenosyl-L-methionine = N(4)-methylcytidine(1402) in 16S rRNA + S-adenosyl-L-homocysteine + H(+). Functionally, specifically methylates the N4 position of cytidine in position 1402 (C1402) of 16S rRNA. This is Ribosomal RNA small subunit methyltransferase H from Francisella tularensis subsp. tularensis (strain FSC 198).